The following is a 199-amino-acid chain: MSGHTPTYASHRRNRVKLVEAHNRAGLFKERTLDLIRGGASVQDPAFVYAFTAAKEACADLNNQLRSAARIASVEQKIRDIQSKVEEQTSIQQILNTNRRYIAPDFIRGLDKTEDDNTDNIDRLEDAVGPNIEHENHTWFGEDDEALLTQWMLTTHPPTSKYLQLQDLCVPTTIPTDMNQMQPQPISKNENPPTPHTDV.

Positions 176 to 191 are enriched in polar residues; it reads TDMNQMQPQPISKNEN. Residues 176–199 form a disordered region; it reads TDMNQMQPQPISKNENPPTPHTDV.

The protein belongs to the alphaherpesvirinae HHV-1 UL14 protein family.

The protein localises to the virion tegument. Its subcellular location is the host cytoplasm. The protein resides in the host nucleus. Contributes to the nuclear transport of the viral transcriptional activator VP16 homolog during the early phase of infection. Therefore, participates indirectly in the regulation of the immediate-early gene expression. Additionally, seems to be important for efficient nuclear targeting of capsids. The sequence is that of Tegument protein UL14 homolog from Varicella-zoster virus (strain Dumas) (HHV-3).